We begin with the raw amino-acid sequence, 316 residues long: Methionyl-tRNA formyltransferase (316 aa).

108–111 (SLLP) is a binding site for (6S)-5,6,7,8-tetrahydrofolate.

The protein belongs to the Fmt family.

It catalyses the reaction L-methionyl-tRNA(fMet) + (6R)-10-formyltetrahydrofolate = N-formyl-L-methionyl-tRNA(fMet) + (6S)-5,6,7,8-tetrahydrofolate + H(+). Attaches a formyl group to the free amino group of methionyl-tRNA(fMet). The formyl group appears to play a dual role in the initiator identity of N-formylmethionyl-tRNA by promoting its recognition by IF2 and preventing the misappropriation of this tRNA by the elongation apparatus. The polypeptide is Methionyl-tRNA formyltransferase (Heliobacterium modesticaldum (strain ATCC 51547 / Ice1)).